The sequence spans 393 residues: S-adenosylmethionine synthase (393 aa).

An ATP-binding site is contributed by His16. Asp18 is a binding site for Mg(2+). Residue Glu44 participates in K(+) binding. L-methionine contacts are provided by Glu57 and Gln100. The flexible loop stretch occupies residues Gln100–Lys110. ATP-binding positions include Asp167–Lys169, Arg238–Phe239, Asp247, Arg253–Lys254, Ala270, and Lys274. L-methionine is bound at residue Asp247. Lys278 contributes to the L-methionine binding site.

The protein belongs to the AdoMet synthase family. In terms of assembly, homotetramer; dimer of dimers. Mg(2+) serves as cofactor. Requires K(+) as cofactor.

Its subcellular location is the cytoplasm. It carries out the reaction L-methionine + ATP + H2O = S-adenosyl-L-methionine + phosphate + diphosphate. Its pathway is amino-acid biosynthesis; S-adenosyl-L-methionine biosynthesis; S-adenosyl-L-methionine from L-methionine: step 1/1. Catalyzes the formation of S-adenosylmethionine (AdoMet) from methionine and ATP. The overall synthetic reaction is composed of two sequential steps, AdoMet formation and the subsequent tripolyphosphate hydrolysis which occurs prior to release of AdoMet from the enzyme. The protein is S-adenosylmethionine synthase of Delftia acidovorans (strain DSM 14801 / SPH-1).